The primary structure comprises 672 residues: DNA ligase (672 aa).

Residues 32–36 (DAEYD), 81–82 (SL), and glutamate 113 contribute to the NAD(+) site. Lysine 115 functions as the N6-AMP-lysine intermediate in the catalytic mechanism. NAD(+)-binding residues include arginine 136, glutamate 173, lysine 290, and lysine 314. The Zn(2+) site is built by cysteine 408, cysteine 411, cysteine 426, and cysteine 432. A BRCT domain is found at 594–672 (EIDSPFAGKT…EAEMLRLLGE (79 aa)).

The protein belongs to the NAD-dependent DNA ligase family. LigA subfamily. The cofactor is Mg(2+). Mn(2+) is required as a cofactor.

It carries out the reaction NAD(+) + (deoxyribonucleotide)n-3'-hydroxyl + 5'-phospho-(deoxyribonucleotide)m = (deoxyribonucleotide)n+m + AMP + beta-nicotinamide D-nucleotide.. DNA ligase that catalyzes the formation of phosphodiester linkages between 5'-phosphoryl and 3'-hydroxyl groups in double-stranded DNA using NAD as a coenzyme and as the energy source for the reaction. It is essential for DNA replication and repair of damaged DNA. This chain is DNA ligase, found in Cronobacter sakazakii (strain ATCC BAA-894) (Enterobacter sakazakii).